The chain runs to 190 residues: Cytidylate kinase (190 aa).

7–15 (GKIGSGKST) lines the ATP pocket.

It belongs to the cytidylate kinase family. Type 2 subfamily.

It is found in the cytoplasm. It carries out the reaction CMP + ATP = CDP + ADP. The enzyme catalyses dCMP + ATP = dCDP + ADP. This Thermoplasma volcanium (strain ATCC 51530 / DSM 4299 / JCM 9571 / NBRC 15438 / GSS1) protein is Cytidylate kinase.